A 701-amino-acid chain; its full sequence is Reverse gyrase subunit A (701 aa).

Residues 41–197 (MVLFIVESPN…NIYRAEFHEV (157 aa)) form the Toprim domain. Glu47 serves as a coordination point for Mg(2+). Residues 117–143 (IKKCLDCGHQFVDEDKCPRCGSENIDD) form an RG C-terminal-type zinc finger. 4 residues coordinate Zn(2+): Cys120, Cys123, Cys133, and Cys136. Mg(2+) is bound at residue Asp166. The Topo IA-type catalytic domain maps to 213–602 (NTNRVKAQLV…SFKKELIEIW (390 aa)). Catalysis depends on Tyr352, which acts as the O-(5'-phospho-DNA)-tyrosine intermediate.

This sequence belongs to the type IA topoisomerase family. As to quaternary structure, heterodimer of an RgyA and RgyB subunit. Requires Zn(2+) as cofactor. The cofactor is Mg(2+).

The protein resides in the cytoplasm. Modifies the topological state of DNA by introducing positive supercoils in an ATP-dependent process. Binds to single-stranded DNA, transiently cleaves and then rejoins the end, introducing a positive supercoil in the process. The scissile phosphodiester is attacked by the catalytic tyrosine of the enzyme, resulting in the formation of a DNA-(5'-phosphotyrosyl)-enzyme intermediate. Probably involved in rewinding DNA strands in regions of the chromosome that have opened up to allow replication, transcription, DNA repair or for DNA protection. Reconstituted holoenzyme binds dsDNA a bit better than ssDNA, this subunit preferentially binds ssDNA. In isolation this subunit relaxes negatively-supercoiled DNA, and stimulates the endogenous ATPase activity of the RgyB subunit. This Nanoarchaeum equitans (strain Kin4-M) protein is Reverse gyrase subunit A.